Reading from the N-terminus, the 1493-residue chain is MVFKVFSFVAFMACSTVKVGSIVWVQDPEEAWIDGEVVEVNGEDIKVQCTSGKTVVAKGSNTYPKDMEVPPSGVDDMTTLAYLHEPGVLQNLKSRYYIDEIYTYTGNILIAVNPFKQLPNLYNDHMMAQYKGAALGELSPHPFAVADAAYRQMINEGISQSILVSGESGAGKTETAKMLMKYLAKMGGRAVSDRRTVEDQVLESNPVLEAFGNAKTVKNNNSSRFGKFVEIQFDQRGRISGAAIRTYLLERSRVCQVSDPERNYHCFYMLCAAPPEDKRKLKLNDPTEFRYLNQSHCIKLDGVDDSKEYTKTREAMGIVGINLEEQEAIFRVVAAILHLGNIEFAIGEEPDSSVPTDESKKYLKIAAELFMCDEQALEDSLCKRIMVTPEETISRCLDPNSAALSRDALAKFVYSRLFDWIVNKINNSIGQDPDSKDMIGVLDIYGFESFKTNSFEQFCINLTNEKLQQHFTQHVLKMEQEEYTKEEIEWSQITFPDNRYVLELIEKKRGGIIALLDEACMFPRSTHKTFSQKLYETLKDNKYFSKPKLSRTDFTICHYAGDVTYQTEQFLEKNKDYVVAEHQALLGASRCTFIAGLFPPLVEDANKQSKFSSIASQFKQQLASLIEGLNTTEPHYIRCVKPNNLLKPSIFENQNSLQQLRCGGVMETIRVCRAGYPTRKHFDEFLDRFGILDSATLDKSSDEKAACKKLLETVGLNGFQIGKTKVFLKAGQMAELDDRRTEVLGRAACIIQWKFRSYLTRQSFIMLRNAAINIQAVYRGQVARYRFENLRREAAALKIQRALRIHLDRKRSYIEAVVTVQSGLRGMAARVVLRRKTKATTVIQSHCRRLRAELHYKKLKKAAITTQSAWRARLARKELRKLKTDARDTVVLQAAKSMLAEKVEELTWRLDLEKRMRVDMEVSKAQENAKLQLALEEIQLQFEETKVSLLKEVEAAKKTAAIVPVVKEVPVVDTVLMEKLTSENEKLKSLVTSLELKIDETEKKFEETKKISEERLKKALDAENKIDNLKTAMHNLEEKLKEVKLENNFLKESVLTTPVKTASGRFLSTPLKNLQNGLFTSEESQLSGAEFTTPPRIQESGSDTKSRGSHIDPQHEDVDALINSVTKNVGFSQGKPVAAFTIYKCLLHWKSFEAERTNVFDRLVQMIGSAIKDEDNDANLAYWLSNTSTLLFMLQQSLKSGGTGATPLRQSPSLVRWMTKGFRSPAAEAIRPVDAKDPALHFKQQLEAYVEKILGIIWDNLKKELNTVLALCIQAPKTFKGNALISITTANYWQDIIEGLDALLSTLKESFVPPVLIQKIFSQAFSLINVQVCNSLVTRPDNCSFINGEYLKSGLEKLEKWCCETKEEYAGSSWDELKHTRQAVGFLLIHKKYNISYDEIANDLCPNLQIQQHFKLCTLYKDEIYNTKSVSQDVIASMTGVMTDSSDFLLKEDSSNIISLSIDDLCSSMQDKDFAQVKPAEELLENPSFIFLH.

The 50-residue stretch at 18 to 67 (KVGSIVWVQDPEEAWIDGEVVEVNGEDIKVQCTSGKTVVAKGSNTYPKDM) folds into the Myosin N-terminal SH3-like domain. Residues 72 to 741 (SGVDDMTTLA…QMAELDDRRT (670 aa)) form the Myosin motor domain. Residues 166-173 (GESGAGKT) and 219-227 (NNNSSRFGK) each bind ATP. 4 actin-binding regions span residues 504 to 538 (LIEK…YETL), 540 to 563 (DNKY…AGDV), 598 to 622 (FPPL…KQQL), and 622 to 644 (LASL…KPNN). 6 consecutive IQ domains span residues 744 to 773 (LGRA…AAIN), 767 to 796 (LRNA…EAAA), 792 to 821 (REAA…VTVQ), 813 to 842 (YIEA…ATTV), 836 to 865 (KTKA…AAIT), and 859 to 888 (LKKA…DARD). A coiled-coil region spans residues 889–1057 (TVVLQAAKSM…NFLKESVLTT (169 aa)). The disordered stretch occupies residues 1085–1114 (QLSGAEFTTPPRIQESGSDTKSRGSHIDPQ). The segment covering 1102–1114 (SDTKSRGSHIDPQ) has biased composition (basic and acidic residues). In terms of domain architecture, Dilute spans 1161–1444 (DRLVQMIGSA…IASMTGVMTD (284 aa)).

This sequence belongs to the TRAFAC class myosin-kinesin ATPase superfamily. Myosin family. Plant myosin class XI subfamily. In terms of assembly, homodimer.

Its function is as follows. Myosin heavy chain that is required for the cell cycle-regulated transport of various organelles and proteins for their segregation. Functions by binding with its tail domain to receptor proteins on organelles and exerting force with its N-terminal motor domain against actin filaments, thereby transporting its cargo along polarized actin cables. This chain is Myosin-13 (XI-G), found in Arabidopsis thaliana (Mouse-ear cress).